A 96-amino-acid polypeptide reads, in one-letter code: Protein transport protein Sec61 subunit beta (96 aa).

A compositionally biased stretch (polar residues) spans 1-17; the sequence is MPGPTPSGTNVGSSGRS. A disordered region spans residues 1-54; it reads MPGPTPSGTNVGSSGRSPSKAVAARAAGSTVRQRKNASCGTRSAGRTTSAGTGG. Position 2 is an N-acetylproline (proline 2). Residues 2–71 are Cytoplasmic-facing; that stretch reads PGPTPSGTNV…DSPGLKVGPV (70 aa). Serine 7 is subject to Phosphoserine. A Phosphothreonine modification is found at threonine 9. Serine 13, serine 14, and serine 17 each carry phosphoserine. Cysteine 39 carries S-palmitoyl cysteine lipidation. Residues 40–50 show a composition bias toward low complexity; the sequence is GTRSAGRTTSA. Residues 72–91 traverse the membrane as a helical segment; it reads PVLVMSLLFIASVFMLHIWG. Over 92–96 the chain is Lumenal; that stretch reads KYTRS.

It belongs to the SEC61-beta family. In terms of assembly, the SEC61 channel-forming translocon complex consists of channel-forming core components SEC61A1, SEC61B and SEC61G and different auxiliary components such as SEC62 and SEC63. The SEC61 channel associates with the multi-pass translocon (MPT) complex. Interacts with TRAM1.

Its subcellular location is the endoplasmic reticulum membrane. In terms of biological role, component of SEC61 channel-forming translocon complex that mediates transport of signal peptide-containing precursor polypeptides across the endoplasmic reticulum (ER). Forms a ribosome receptor and a gated pore in the ER membrane, both functions required for cotranslational translocation of nascent polypeptides. The SEC61 channel is also involved in ER membrane insertion of transmembrane proteins: it mediates membrane insertion of the first few transmembrane segments of proteins, while insertion of subsequent transmembrane regions of multi-pass membrane proteins is mediated by the multi-pass translocon (MPT) complex. The SEC61 channel cooperates with the translocating protein TRAM1 to import nascent proteins into the ER. In Canis lupus familiaris (Dog), this protein is Protein transport protein Sec61 subunit beta (SEC61B).